The primary structure comprises 135 residues: Large ribosomal subunit protein uL16c (135 aa).

Over residues 1-17 (MLSPKRTRFRKQHRGRM) the composition is skewed to basic residues. The disordered stretch occupies residues 1–20 (MLSPKRTRFRKQHRGRMKGT).

Belongs to the universal ribosomal protein uL16 family. In terms of assembly, part of the 50S ribosomal subunit.

It is found in the plastid. Its subcellular location is the chloroplast. This is Large ribosomal subunit protein uL16c from Lemna minor (Common duckweed).